The chain runs to 171 residues: HTH-type transcriptional regulator AldR (171 aa).

The span at 1 to 14 (MSEGSSITGVQTPG) shows a compositional bias: polar residues. Residues 1–21 (MSEGSSITGVQTPGSPKDVRA) are disordered. Residues 24–85 (LDDIDRRILL…DIDPAAVGLG (62 aa)) enclose the HTH asnC-type domain. The segment at residues 43-62 (NSALAEMVGIAPSTCHGRVR) is a DNA-binding region (H-T-H motif).

As to quaternary structure, homodimer in the absence of L-alanine. Homooctamer in the presence of L-alanine. Homotetramers in the presence of L-cysteine.

Its activity is regulated as follows. In the presence of alanine, AldR changes its quaternary structure from a homodimer to an octamer with an open-ring conformation. The binding affinity of AldR for the ald control region is increased significantly by L-alanine. In vitro, L-cysteine also increases the binding affinity of AldR for the target DNA. In terms of biological role, transcriptional regulator that might play a role under hypoxic conditions. Regulates the expression of ald, which encodes L-alanine dehydrogenase. Serves as both an activator for ald expression in the presence of L-alanine and a repressor in the absence of L-alanine. Acts by binding directly to the upstream region of the ald gene. Four AldR-binding sites (O2, O1, O4 and O3) were identified upstream of the ald gene. O2, O1 and O4 are required for the induction of ald expression by alanine, while O3 is directly involved in the repression of ald expression, by occluding the access of RNA polymerase to the ald promoter. In addition to O3, both O1 and O4 are also necessary for full repression of ald expression in the absence of alanine. The sequence is that of HTH-type transcriptional regulator AldR from Mycolicibacterium smegmatis (strain ATCC 700084 / mc(2)155) (Mycobacterium smegmatis).